Here is a 366-residue protein sequence, read N- to C-terminus: Fructose-bisphosphate aldolase 1 (366 aa).

Positions 56 and 147 each coordinate substrate. Glu189 acts as the Proton acceptor in catalysis. The active-site Schiff-base intermediate with dihydroxyacetone-P is Lys231.

The protein belongs to the class I fructose-bisphosphate aldolase family. As to expression, ubiquitous.

The catalysed reaction is beta-D-fructose 1,6-bisphosphate = D-glyceraldehyde 3-phosphate + dihydroxyacetone phosphate. It participates in carbohydrate degradation; glycolysis; D-glyceraldehyde 3-phosphate and glycerone phosphate from D-glucose: step 4/4. Its function is as follows. May be involved in the metabolism of fructose-bisphosphate (beta-D-fructose 1,6-bisphosphate) and of fructose 1-phosphate. This is Fructose-bisphosphate aldolase 1 (aldo-1) from Caenorhabditis elegans.